The sequence spans 580 residues: 9,13-epoxylabda-14-ene synthase, chloroplastic (580 aa).

The transit peptide at 1 to 32 (MSITFNLKIAPFSGPGIQRSKETFPATEIQIT) directs the protein to the chloroplast. The Mg(2+) site is built by aspartate 322, aspartate 326, asparagine 466, threonine 470, and glutamate 474. The DDXXD motif signature appears at 322–326 (DDFFD).

It belongs to the terpene synthase family. Mg(2+) is required as a cofactor. As to expression, present in both leaves and flowers, with higher levels in leaves.

Its subcellular location is the plastid. It is found in the chloroplast. It carries out the reaction peregrinol diphosphate = (13R)-9,13-epoxylabd-14-ene + diphosphate. The enzyme catalyses (+)-copalyl diphosphate = miltiradiene + diphosphate. It catalyses the reaction 8-hydroxycopalyl diphosphate = (13R)-manoyl oxide + diphosphate. It functions in the pathway secondary metabolite biosynthesis; terpenoid biosynthesis. Functionally, involved in the biosynthesis of labdane-type diterpenoid including marrubiin and other labdane-related furanoid diterpenoids with potential applications as anti-diabetics, analgesics or vasorelaxants. Terpene synthase the catalyzes the conversion of peregrinol diphosphate to 9,13(R)-epoxy-labd-14-ene, from (+)-copalyl diphosphate ((+)-CPP) to miltiradiene and from 8-hydroxycopalyl diphosphate (LPP, labda-13-en-8-ol diphosphate) to manoyl oxide. The sequence is that of 9,13-epoxylabda-14-ene synthase, chloroplastic from Marrubium vulgare (White horehound).